Reading from the N-terminus, the 138-residue chain is Small ribosomal subunit protein uS9 (138 aa).

The protein belongs to the universal ribosomal protein uS9 family.

The chain is Small ribosomal subunit protein uS9 (rps9) from Sulfolobus acidocaldarius (strain ATCC 33909 / DSM 639 / JCM 8929 / NBRC 15157 / NCIMB 11770).